The primary structure comprises 175 residues: Large ribosomal subunit protein uL10 (175 aa).

It belongs to the universal ribosomal protein uL10 family. As to quaternary structure, part of the ribosomal stalk of the 50S ribosomal subunit. The N-terminus interacts with L11 and the large rRNA to form the base of the stalk. The C-terminus forms an elongated spine to which L12 dimers bind in a sequential fashion forming a multimeric L10(L12)X complex.

Its function is as follows. Forms part of the ribosomal stalk, playing a central role in the interaction of the ribosome with GTP-bound translation factors. This is Large ribosomal subunit protein uL10 from Xylella fastidiosa (strain M12).